The primary structure comprises 254 residues: Thiazole synthase (254 aa).

Residue lysine 96 is the Schiff-base intermediate with DXP of the active site. 1-deoxy-D-xylulose 5-phosphate is bound by residues glycine 157, 183 to 184, and 205 to 206; these read AG and NT.

This sequence belongs to the ThiG family. In terms of assembly, homotetramer. Forms heterodimers with either ThiH or ThiS.

It is found in the cytoplasm. The enzyme catalyses [ThiS sulfur-carrier protein]-C-terminal-Gly-aminoethanethioate + 2-iminoacetate + 1-deoxy-D-xylulose 5-phosphate = [ThiS sulfur-carrier protein]-C-terminal Gly-Gly + 2-[(2R,5Z)-2-carboxy-4-methylthiazol-5(2H)-ylidene]ethyl phosphate + 2 H2O + H(+). It participates in cofactor biosynthesis; thiamine diphosphate biosynthesis. In terms of biological role, catalyzes the rearrangement of 1-deoxy-D-xylulose 5-phosphate (DXP) to produce the thiazole phosphate moiety of thiamine. Sulfur is provided by the thiocarboxylate moiety of the carrier protein ThiS. In vitro, sulfur can be provided by H(2)S. This is Thiazole synthase from Bacillus velezensis (strain DSM 23117 / BGSC 10A6 / LMG 26770 / FZB42) (Bacillus amyloliquefaciens subsp. plantarum).